The primary structure comprises 342 residues: Bifunctional terpene synthase Agr4 (342 aa).

4 residues coordinate Mg(2+): Asp-87, Asn-222, Ser-226, and Glu-230. The DDXXD motif signature appears at 87–91 (DEVSD). Residues Arg-308 and Tyr-309 each contribute to the (2E,6E)-farnesyl diphosphate site.

Belongs to the terpene synthase family. Mg(2+) serves as cofactor.

The catalysed reaction is (2E,6E)-farnesyl diphosphate = delta-cadinene + diphosphate. The enzyme catalyses (2E,6E)-farnesyl diphosphate = gamma-muurolene + diphosphate. It carries out the reaction (2E,6E)-farnesyl diphosphate = beta-copaene + diphosphate. It catalyses the reaction (2E)-geranyl diphosphate = beta-myrcene + diphosphate. Terpene cyclase that catalyzes the cyclization of farnesyl diphosphate (FPP) to various sesquiterpenes, including beta-copaene, alpha-cubebene, cadina-1(6),4-diene, gamma-muurolene, delta-cadinene, epizonarene, epicubenol and cubenol. Agr4 is also able to use the monoterpene precursor geranyl diphosphate (GPP) as substrates to synthesize the monoterpene beta-myrcene. Delta-cadinene is the major product of Agr4. The protein is Bifunctional terpene synthase Agr4 of Cyclocybe aegerita (Black poplar mushroom).